The chain runs to 962 residues: Putative primase C962R (962 aa).

The SF3 helicase domain maps to 607 to 775 (ELDARLWIMF…PDPNNSYEKK (169 aa)). 636 to 643 (GGGCNGKT) provides a ligand contact to ATP.

Belongs to the asfivirus helicase C962R family.

The sequence is that of Putative primase C962R from Ornithodoros (relapsing fever ticks).